The sequence spans 227 residues: Transmembrane emp24 domain-containing protein 1 (227 aa).

Residues 1-24 (MMAAGAAVALALWLLLPAVGVGEA) form the signal peptide. Residues 25-194 (GPPPIQDGEF…LQEDNLERVN (170 aa)) are Extracellular-facing. A GOLD domain is found at 43 to 125 (KQCFYQSAPA…EKLVFFELIF (83 aa)). The stretch at 145-170 (EMLDVKMEDIKESIETMRTRLERSIQ) forms a coiled coil. A helical transmembrane segment spans residues 195–215 (FWSAANVAVLLLVAVLQVCTL). Residues 216–227 (KRFFHDKRPVPT) are Cytoplasmic-facing. Residues 218 to 219 (FF) carry the COPII vesicle coat-binding motif. Positions 218–227 (FFHDKRPVPT) match the COPI vesicle coat-binding motif.

This sequence belongs to the EMP24/GP25L family. As to quaternary structure, homodimer in endoplasmic reticulum, endoplasmic reticulum-Golgi intermediate compartment and cis-Golgi network. Interacts with IL1RL1. Interacts with RNF26; this interaction is important to modulate innate immune signaling through the cGAS-STING pathway. In terms of tissue distribution, widely expressed.

It localises to the cell membrane. The protein localises to the endoplasmic reticulum membrane. It is found in the golgi apparatus. Its subcellular location is the cis-Golgi network membrane. The protein resides in the endoplasmic reticulum-Golgi intermediate compartment membrane. In terms of biological role, potential role in vesicular protein trafficking, mainly in the early secretory pathway. May act as a cargo receptor at the lumenal side for incorporation of secretory cargo molecules into transport vesicles and may be involved in vesicle coat formation at the cytoplasmic side. Plays a positive role in IL-33-mediated IL-8 and IL-6 production by interacting with interleukin-33 receptor IL1RL1. Plays also a role in the modulation of innate immune signaling through the cGAS-STING pathway by interacting with RNF26. In Mus musculus (Mouse), this protein is Transmembrane emp24 domain-containing protein 1 (Tmed1).